Here is a 164-residue protein sequence, read N- to C-terminus: Peptidyl-prolyl cis-trans isomerase A (164 aa).

An N-acetylmethionine modification is found at Met1. Val2 carries the N-acetylvaline; in Peptidyl-prolyl cis-trans isomerase A, N-terminally processed modification. Residues 7-163 (FFDIAVDGEP…KKITIANCGQ (157 aa)) form the PPIase cyclophilin-type domain. Residue Lys28 is modified to N6-acetyllysine; alternate. Residue Lys28 forms a Glycyl lysine isopeptide (Lys-Gly) (interchain with G-Cter in SUMO2); alternate linkage. Lys28 participates in a covalent cross-link: Glycyl lysine isopeptide (Lys-Gly) (interchain with G-Cter in ubiquitin); alternate. An N6-acetyllysine mark is found at Lys44 and Lys76. Residue Ser77 is modified to Phosphoserine. Lys82 is subject to N6-acetyllysine; alternate. A Glycyl lysine isopeptide (Lys-Gly) (interchain with G-Cter in SUMO2); alternate cross-link involves residue Lys82. Thr93 carries the post-translational modification Phosphothreonine. The N-linked (GlcNAc...) asparagine glycan is linked to Asn108. Residues Lys125 and Lys133 each carry the N6-acetyllysine modification.

Belongs to the cyclophilin-type PPIase family. PPIase A subfamily. In terms of assembly, interacts with protein phosphatase PPP3CA/calcineurin A. Interacts with isoform 2 of BSG/CD147. Interacts with FOXO1; the interaction promotes FOXO1 dephosphorylation, nuclear accumulation and transcriptional activity. Interacts with integrin ITGA2B:ITGB3; the interaction is ROS and peptidyl-prolyl cis-trans isomerase (PPIase) activity-dependent and is increased in the presence of thrombin. Interacts with MAP3K5. Interacts with TARDBP; the interaction is dependent on the RNA-binding activity of TARDBP and the PPIase activity of PPIA/CYPA and the acetylation of PPIA/CYPA at Lys-125 favors the interaction. Interacts with HNRNPA1, HNRNPA2B1, HNRNPC, RBMX, HNRNPK and HNRNPM. Post-translationally, acetylation at Lys-125 markedly inhibits catalysis of cis to trans isomerization. PPIA acetylation also antagonizes the immunosuppressive effects of cyclosporine by inhibiting the sequential steps of cyclosporine binding and calcineurin inhibition. Acetylation at Lys-125 favors the interaction with TARDBP.

Its subcellular location is the cytoplasm. The protein resides in the secreted. It localises to the nucleus. The catalysed reaction is [protein]-peptidylproline (omega=180) = [protein]-peptidylproline (omega=0). With respect to regulation, binds cyclosporin A (CsA). CsA mediates some of its effects via an inhibitory action on PPIase. In terms of biological role, catalyzes the cis-trans isomerization of proline imidic peptide bonds in oligopeptides. Exerts a strong chemotactic effect on leukocytes partly through activation of one of its membrane receptors BSG/CD147, initiating a signaling cascade that culminates in MAPK/ERK activation. Activates endothelial cells (ECs) in a proinflammatory manner by stimulating activation of NF-kappa-B and ERK, JNK and p38 MAP-kinases and by inducing expression of adhesion molecules including SELE and VCAM1. Induces apoptosis in ECs by promoting the FOXO1-dependent expression of CCL2 and BCL2L11 which are involved in EC chemotaxis and apoptosis. In response to oxidative stress, initiates proapoptotic and antiapoptotic signaling in ECs via activation of NF-kappa-B and AKT1 and up-regulation of antiapoptotic protein BCL2. Negatively regulates MAP3K5/ASK1 kinase activity, autophosphorylation and oxidative stress-induced apoptosis mediated by MAP3K5/ASK1. Necessary for the assembly of TARDBP in heterogeneous nuclear ribonucleoprotein (hnRNP) complexes and regulates TARDBP binding to RNA UG repeats and TARDBP-dependent expression of HDAC6, ATG7 and VCP which are involved in clearance of protein aggregates. Plays an important role in platelet activation and aggregation. Regulates calcium mobilization and integrin ITGA2B:ITGB3 bidirectional signaling via increased ROS production as well as by facilitating the interaction between integrin and the cell cytoskeleton. Binds heparan sulfate glycosaminoglycans. This Oryctolagus cuniculus (Rabbit) protein is Peptidyl-prolyl cis-trans isomerase A (PPIA).